Here is a 246-residue protein sequence, read N- to C-terminus: Major prion protein (246 aa).

The N-terminal stretch at Met1–Cys15 is a signal peptide. Residues Lys16–Ser223 are interaction with GRB2, ERI3 and SYN1. A disordered region spans residues Arg18–Met102. Tandem repeats lie at residues Pro44–Gln52, Pro53–Gln60, Pro61–Gln68, Pro69–Gln76, and Pro77–Gln84. The interval Pro44–Gln84 is 5 X 8 AA tandem repeats of P-H-G-G-G-W-G-Q. Gly residues predominate over residues Gln45–Thr88. Residues His54, Gly55, Gly56, His62, Gly63, Gly64, His70, Gly71, Gly72, His78, Gly79, and Gly80 each coordinate Cu(2+). Positions Gln91–Met102 are enriched in basic residues. The cysteines at positions 172 and 207 are disulfide-linked. N-linked (GlcNAc...) asparagine glycans are attached at residues Asn174 and Asn190. Ser223 is lipidated: GPI-anchor amidated serine. Positions Ser224–Gly246 are cleaved as a propeptide — removed in mature form.

This sequence belongs to the prion family. In terms of assembly, monomer and homodimer. Has a tendency to aggregate into amyloid fibrils containing a cross-beta spine, formed by a steric zipper of superposed beta-strands. Soluble oligomers may represent an intermediate stage on the path to fibril formation. Copper binding may promote oligomerization. Interacts with GRB2, APP, ERI3/PRNPIP and SYN1. Mislocalized cytosolically exposed PrP interacts with MGRN1; this interaction alters MGRN1 subcellular location and causes lysosomal enlargement. Interacts with KIAA1191.

Its subcellular location is the cell membrane. The protein resides in the golgi apparatus. Its function is as follows. Its primary physiological function is unclear. Has cytoprotective activity against internal or environmental stresses. May play a role in neuronal development and synaptic plasticity. May be required for neuronal myelin sheath maintenance. May play a role in iron uptake and iron homeostasis. Soluble oligomers are toxic to cultured neuroblastoma cells and induce apoptosis (in vitro). Association with GPC1 (via its heparan sulfate chains) targets PRNP to lipid rafts. Also provides Cu(2+) or Zn(2+) for the ascorbate-mediated GPC1 deaminase degradation of its heparan sulfate side chains. In Cercopithecus mona (Mona monkey), this protein is Major prion protein (PRNP).